Reading from the N-terminus, the 453-residue chain is Obtusifoliol 14-alpha demethylase (453 aa).

Position 395 (C395) interacts with heme.

It belongs to the cytochrome P450 family. It depends on heme as a cofactor.

Its subcellular location is the membrane. The catalysed reaction is a 14alpha-methyl steroid + 3 reduced [NADPH--hemoprotein reductase] + 3 O2 = a Delta(14) steroid + formate + 3 oxidized [NADPH--hemoprotein reductase] + 4 H2O + 4 H(+). The protein operates within steroid biosynthesis; zymosterol biosynthesis; zymosterol from lanosterol: step 1/6. Functionally, catalyzes the 14-alpha demethylation of obtusifoliol to 4 alpha-methyl-5 alpha-ergosta-8,14,24(28)-trien-3 beta-ol. The chain is Obtusifoliol 14-alpha demethylase (CYP51) from Triticum aestivum (Wheat).